A 286-amino-acid polypeptide reads, in one-letter code: ATP synthase gamma chain (286 aa).

Belongs to the ATPase gamma chain family. F-type ATPases have 2 components, CF(1) - the catalytic core - and CF(0) - the membrane proton channel. CF(1) has five subunits: alpha(3), beta(3), gamma(1), delta(1), epsilon(1). CF(0) has three main subunits: a, b and c.

It is found in the cell inner membrane. Functionally, produces ATP from ADP in the presence of a proton gradient across the membrane. The gamma chain is believed to be important in regulating ATPase activity and the flow of protons through the CF(0) complex. This is ATP synthase gamma chain from Marinomonas sp. (strain MWYL1).